Reading from the N-terminus, the 1113-residue chain is uncharacterized protein (1113 aa).

313–320 (GPPGTGKS) is a binding site for ATP.

It belongs to the DNA2/NAM7 helicase family.

This is an uncharacterized protein from Mycoplasma pneumoniae (strain ATCC 29342 / M129 / Subtype 1) (Mycoplasmoides pneumoniae).